The sequence spans 79 residues: uncharacterized protein (79 aa).

This sequence belongs to the asfivirus D79L family.

This is an uncharacterized protein from Ornithodoros (relapsing fever ticks).